We begin with the raw amino-acid sequence, 172 residues long: Large ribosomal subunit protein uL10 (172 aa).

Belongs to the universal ribosomal protein uL10 family. As to quaternary structure, part of the ribosomal stalk of the 50S ribosomal subunit. The N-terminus interacts with L11 and the large rRNA to form the base of the stalk. The C-terminus forms an elongated spine to which L12 dimers bind in a sequential fashion forming a multimeric L10(L12)X complex.

In terms of biological role, forms part of the ribosomal stalk, playing a central role in the interaction of the ribosome with GTP-bound translation factors. This is Large ribosomal subunit protein uL10 from Rhodopseudomonas palustris (strain HaA2).